A 576-amino-acid polypeptide reads, in one-letter code: Non-neuronal cytoplasmic intermediate filament protein (576 aa).

The tract at residues 1–51 (MTSKISTTYEEEGRQSKIQPRAFVITRSGPSSKSSSFSARQSYASSRQSIT) is disordered. The head stretch occupies residues 2-75 (TSKISTTYEE…FRGTREKEKR (74 aa)). A compositionally biased stretch (low complexity) spans 28-49 (SGPSSKSSSFSARQSYASSRQS). The 353-residue stretch at 73–425 (EKREMQNLNE…KLLEGEESRV (353 aa)) folds into the IF rod domain. The tract at residues 76–108 (EMQNLNERLASYIEKVHFLDAQVKKLEAENEAL) is coil 1A. The segment at 109-122 (RNRKSESLQPIRDA) is linker 1. The coil 1B stretch occupies residues 123–260 (YENELAQARK…DLLDQLELLK (138 aa)). Positions 261–278 (PEPIQIKGMDYAEFWKSE) are linker 2. The segment at 279-425 (LSKCVREIQS…KLLEGEESRV (147 aa)) is coil 2. Residues 426–576 (GLRSLVEQAI…KATLIAKFSG (151 aa)) form a tail region. One can recognise an LTD domain in the interval 456-574 (GSMTIQRSSK…NEKATLIAKF (119 aa)).

This sequence belongs to the intermediate filament family. Can form homopolymers.

The protein localises to the cytoplasm. This Cornu aspersum (Brown garden snail) protein is Non-neuronal cytoplasmic intermediate filament protein.